Here is a 139-residue protein sequence, read N- to C-terminus: Large ribosomal subunit protein bL17 (139 aa).

The tract at residues 120–139 is disordered; that stretch reads ESAKGQDSGPVHVEGDEEAA.

Belongs to the bacterial ribosomal protein bL17 family. In terms of assembly, part of the 50S ribosomal subunit. Contacts protein L32.

The protein is Large ribosomal subunit protein bL17 of Parvibaculum lavamentivorans (strain DS-1 / DSM 13023 / NCIMB 13966).